We begin with the raw amino-acid sequence, 450 residues long: Oxygen-independent coproporphyrinogen III oxidase (450 aa).

Positions 42–276 (LPAGASASLY…CAIANALKEA (235 aa)) constitute a Radical SAM core domain. Residue Y51 coordinates S-adenosyl-L-methionine. [4Fe-4S] cluster-binding residues include C57 and C61. S-adenosyl-L-methionine is bound at residue Y63. Position 64 (C64) interacts with [4Fe-4S] cluster. Residues G108, 109-110 (GT), E141, Q168, R180, D205, A239, and I325 contribute to the S-adenosyl-L-methionine site.

It belongs to the anaerobic coproporphyrinogen-III oxidase family. Monomer. [4Fe-4S] cluster serves as cofactor.

It localises to the cytoplasm. The enzyme catalyses coproporphyrinogen III + 2 S-adenosyl-L-methionine = protoporphyrinogen IX + 2 5'-deoxyadenosine + 2 L-methionine + 2 CO2. It functions in the pathway porphyrin-containing compound metabolism; protoporphyrin-IX biosynthesis; protoporphyrinogen-IX from coproporphyrinogen-III (AdoMet route): step 1/1. Involved in the heme biosynthesis. Catalyzes the anaerobic oxidative decarboxylation of propionate groups of rings A and B of coproporphyrinogen III to yield the vinyl groups in protoporphyrinogen IX. In Bradyrhizobium diazoefficiens (strain JCM 10833 / BCRC 13528 / IAM 13628 / NBRC 14792 / USDA 110), this protein is Oxygen-independent coproporphyrinogen III oxidase (hemN).